The primary structure comprises 167 residues: Endoribonuclease YbeY (167 aa).

Zn(2+) contacts are provided by His-131, His-135, and His-141.

The protein belongs to the endoribonuclease YbeY family. The cofactor is Zn(2+).

It localises to the cytoplasm. In terms of biological role, single strand-specific metallo-endoribonuclease involved in late-stage 70S ribosome quality control and in maturation of the 3' terminus of the 16S rRNA. In Rickettsia prowazekii (strain Madrid E), this protein is Endoribonuclease YbeY.